The following is a 546-amino-acid chain: Putative serine/threonine-protein kinase L268 (546 aa).

The Cyclin N-terminal domain maps to 1-112; sequence MVCFSKYSGI…ILQTLDFHLV (112 aa). One can recognise a Protein kinase domain in the interval 260–544; the sequence is ITVVKNLGEG…QTLEEFNKFN (285 aa). ATP-binding positions include 266–274 and K287; that span reads LGEGTYGTV. Catalysis depends on D389, which acts as the Proton acceptor.

It belongs to the protein kinase superfamily. Ser/Thr protein kinase family.

The catalysed reaction is L-seryl-[protein] + ATP = O-phospho-L-seryl-[protein] + ADP + H(+). It carries out the reaction L-threonyl-[protein] + ATP = O-phospho-L-threonyl-[protein] + ADP + H(+). The chain is Putative serine/threonine-protein kinase L268 from Acanthamoeba polyphaga mimivirus (APMV).